The chain runs to 241 residues: 2-C-methyl-D-erythritol 4-phosphate cytidylyltransferase (241 aa).

The protein belongs to the IspD/TarI cytidylyltransferase family. IspD subfamily.

The catalysed reaction is 2-C-methyl-D-erythritol 4-phosphate + CTP + H(+) = 4-CDP-2-C-methyl-D-erythritol + diphosphate. Its pathway is isoprenoid biosynthesis; isopentenyl diphosphate biosynthesis via DXP pathway; isopentenyl diphosphate from 1-deoxy-D-xylulose 5-phosphate: step 2/6. Its function is as follows. Catalyzes the formation of 4-diphosphocytidyl-2-C-methyl-D-erythritol from CTP and 2-C-methyl-D-erythritol 4-phosphate (MEP). The polypeptide is 2-C-methyl-D-erythritol 4-phosphate cytidylyltransferase (Hahella chejuensis (strain KCTC 2396)).